A 324-amino-acid polypeptide reads, in one-letter code: Proto-oncogene Mas (324 aa).

Residues 1–35 lie on the Extracellular side of the membrane; that stretch reads MDQSNMTSLAEEKAMNTSSRNASLGSSHPPIPIVH. Residues N5, N16, and N21 are each glycosylated (N-linked (GlcNAc...) asparagine). The chain crosses the membrane as a helical span at residues 36–60; the sequence is WVIMSISPLGFVENGILLWFLCFRM. Residues 61 to 64 are Cytoplasmic-facing; that stretch reads RRNP. The helical transmembrane segment at 65 to 86 threads the bilayer; sequence FTVYITHLSIADISLLFCIFIL. At 87 to 103 the chain is on the extracellular side; that stretch reads SIDYALDYELSSGHHYT. Residues 104-127 form a helical membrane-spanning segment; that stretch reads IVTLSVTFLFGYNTGLYLLTAISV. The Cytoplasmic portion of the chain corresponds to 128–148; the sequence is ERCLSVLYPIWYRCHRPKHQS. Residues 149–171 form a helical membrane-spanning segment; it reads AFVCALLWALSCLVTTMEYVMCI. The Extracellular portion of the chain corresponds to 172–184; the sequence is DSGEESHSRSDCR. Residues 185-205 form a helical membrane-spanning segment; the sequence is AVIIFIAILSFLVFTPLMLVS. Residues 206–223 lie on the Cytoplasmic side of the membrane; sequence STILVVKIRKNTWASHSS. The chain crosses the membrane as a helical span at residues 224–244; sequence KLYIVIMVTIIIFLIFAMPMR. Topologically, residues 245-262 are extracellular; it reads VLYLLYYEYWSAFGNLHN. The chain crosses the membrane as a helical span at residues 263–283; it reads ISLLFSTINSSANPFIYFFVG. The Cytoplasmic segment spans residues 284-324; sequence SSKKKRFRESLKVVLTRAFKDEMQPRRQEGNGNTVSIETVV.

Belongs to the G-protein coupled receptor 1 family. In terms of assembly, interacts with AGTR1. Interacts with FLNA (via filamin repeat 21); increases PKA-mediated phosphorylation of FLNA.

It is found in the cell membrane. In terms of biological role, acts specifically as a functional antagonist of AGTR1 (angiotensin-2 type 1 receptor), although it up-regulates AGTR1 receptor levels. Positive regulation of AGTR1 levels occurs through activation of the G-proteins GNA11 and GNAQ, and stimulation of the protein kinase C signaling cascade. The antagonist effect on AGTR1 function is probably due to AGTR1 being physically altered by MAS1. Receptor for angiotensin 1-7. This is Proto-oncogene Mas (Mas1) from Mus musculus (Mouse).